The primary structure comprises 243 residues: Isoprenyl transferase 2 (243 aa).

The active site involves Asp-23. Asp-23 is a binding site for Mg(2+). Residues 24-27, Trp-28, Arg-36, His-40, and 68-70 each bind substrate; these read GNGR and STE. Catalysis depends on Asn-71, which acts as the Proton acceptor. Substrate-binding positions include Trp-72, Arg-74, Arg-191, and 197–199; that span reads RTS. Glu-210 serves as a coordination point for Mg(2+).

This sequence belongs to the UPP synthase family. Homodimer. Requires Mg(2+) as cofactor.

Functionally, catalyzes the condensation of isopentenyl diphosphate (IPP) with allylic pyrophosphates generating different type of terpenoids. The sequence is that of Isoprenyl transferase 2 from Corynebacterium efficiens (strain DSM 44549 / YS-314 / AJ 12310 / JCM 11189 / NBRC 100395).